A 257-amino-acid polypeptide reads, in one-letter code: uncharacterized protein (257 aa).

Disordered stretches follow at residues 86 to 119 and 182 to 206; these read SDEE…RPLS and STPL…TDGQ. The span at 196–206 shows a compositional bias: polar residues; the sequence is PTPTSQLTDGQ.

This is an uncharacterized protein from Invertebrate iridescent virus 3 (IIV-3).